The sequence spans 451 residues: SH2 domain-containing protein 7 (451 aa).

The SH2 domain maps to 51–142; the sequence is WFHGFITRKQ…PFKEMLTAAC (92 aa). Disordered stretches follow at residues 180–232, 256–321, and 408–436; these read KAAS…SLLE, LGTE…SDAM, and GTPE…THKP. Positions 221 to 232 are enriched in low complexity; sequence SPLPEKSSSLLE. A compositionally biased stretch (basic and acidic residues) spans 279–291; sequence EAQRRLSDGEQNR. Residues 306–316 are compositionally biased toward polar residues; the sequence is QGPTESPTSWG. Residues 426–436 show a composition bias toward basic and acidic residues; it reads KSKETGRTHKP.

This chain is SH2 domain-containing protein 7 (SH2D7), found in Homo sapiens (Human).